We begin with the raw amino-acid sequence, 439 residues long: ATP-dependent RNA helicase SrmB (439 aa).

Positions 4-32 match the Q motif motif; it reads SQFEQFDLSPELLKALEKKGYSRPTAIQM. Residues 35–209 enclose the Helicase ATP-binding domain; the sequence is IPAAMEESDV…AERLLNDPVK (175 aa). ATP is bound at residue 48-55; sequence APTGTGKT. The short motif at 157–160 is the DEAD box element; that stretch reads DEAD. The Helicase C-terminal domain occupies 237–387; the sequence is KLLARFIETE…GLEPRTKPPK (151 aa). A compositionally biased stretch (basic and acidic residues) spans 381–393; sequence PRTKPPKDGEVKS. A disordered region spans residues 381–439; sequence PRTKPPKDGEVKSVSKKQKARIKEKREEKKKTEAKKKVKLRHKDTKNIGKRRKPSNSNV. Basic residues-rich tracts occupy residues 394–403 and 412–439; these read VSKKQKARIK and TEAKKKVKLRHKDTKNIGKRRKPSNSNV.

It belongs to the DEAD box helicase family. SrmB subfamily. In terms of assembly, interacts with the 50S ribosomal subunit.

It localises to the cytoplasm. It carries out the reaction ATP + H2O = ADP + phosphate + H(+). In terms of biological role, DEAD-box RNA helicase involved in the assembly of the 50S ribosomal subunit at low temperature. Exhibits RNA-stimulated ATP hydrolysis and RNA unwinding activity. The sequence is that of ATP-dependent RNA helicase SrmB from Haemophilus influenzae (strain ATCC 51907 / DSM 11121 / KW20 / Rd).